The following is a 319-amino-acid chain: Transaldolase (319 aa).

Lys-125 serves as the catalytic Schiff-base intermediate with substrate.

This sequence belongs to the transaldolase family. Type 1 subfamily. Homodimer.

Its subcellular location is the cytoplasm. It catalyses the reaction D-sedoheptulose 7-phosphate + D-glyceraldehyde 3-phosphate = D-erythrose 4-phosphate + beta-D-fructose 6-phosphate. It functions in the pathway carbohydrate degradation; pentose phosphate pathway; D-glyceraldehyde 3-phosphate and beta-D-fructose 6-phosphate from D-ribose 5-phosphate and D-xylulose 5-phosphate (non-oxidative stage): step 2/3. Transaldolase is important for the balance of metabolites in the pentose-phosphate pathway. This Ralstonia nicotianae (strain ATCC BAA-1114 / GMI1000) (Ralstonia solanacearum) protein is Transaldolase.